The following is a 711-amino-acid chain: Putative DNA topoisomerase 3 (711 aa).

One can recognise a Toprim domain in the interval 2–135; it reads KYLILAEKPS…LRRLWISSVT (134 aa). Mg(2+) is bound by residues Glu8 and Asp104. Residues 152-580 enclose the Topo IA-type catalytic domain; that stretch reads YNDLYYAALA…EMKGFTKDVV (429 aa). The interval 186 to 191 is interaction with DNA; the sequence is SLGRVQ. The O-(5'-phospho-DNA)-tyrosine intermediate role is filled by Tyr305. The tract at residues 691–711 is disordered; the sequence is MNKNEGLDNNPFKDALKNLNL.

The protein belongs to the type IA topoisomerase family. Requires Mg(2+) as cofactor.

It catalyses the reaction ATP-independent breakage of single-stranded DNA, followed by passage and rejoining.. In terms of biological role, releases the supercoiling and torsional tension of DNA, which is introduced during the DNA replication and transcription, by transiently cleaving and rejoining one strand of the DNA duplex. Introduces a single-strand break via transesterification at a target site in duplex DNA. The scissile phosphodiester is attacked by the catalytic tyrosine of the enzyme, resulting in the formation of a DNA-(5'-phosphotyrosyl)-enzyme intermediate and the expulsion of a 3'-OH DNA strand. The free DNA strand then undergoes passage around the unbroken strand, thus removing DNA supercoils. Finally, in the religation step, the DNA 3'-OH attacks the covalent intermediate to expel the active-site tyrosine and restore the DNA phosphodiester backbone. In Staphylococcus aureus (strain bovine RF122 / ET3-1), this protein is Putative DNA topoisomerase 3.